The following is a 188-amino-acid chain: UPF0397 protein LACR_0367 (188 aa).

Transmembrane regions (helical) follow at residues 14 to 34 (IVVA…LINI), 48 to 68 (AVLA…IGFI), 80 to 100 (APWW…GFGV), 120 to 140 (IVQF…GDIL), and 152 to 172 (QGVV…TLLL).

The protein belongs to the UPF0397 family.

The protein localises to the cell membrane. This Lactococcus lactis subsp. cremoris (strain SK11) protein is UPF0397 protein LACR_0367.